A 307-amino-acid chain; its full sequence is MTSVRHYLQFSDLSPDEYHHLFERSRVLKRRQSAGELHRPLVGKVMSMVFEKNSTRTRVSFEAGMAQLGGHAMFLDTKSSQIGRGEPIEDTARVLSRMSDIIMIRTFEQGLVQRLAAHSRVPVINGLTNEYHPCQVLADIFTYVERHGSIKGKTVAWVGDGNNVCRTWLQAAAVLGFKLKVASPLGYELQTLDGRHYGSDVLEMTRDPARAVHGADIVTTDVFTSMGFEAEQAARREAFEGYQVTAELMKQAKPEALFMHCLPAHRGEEVAAEVIDGPQSVVWDEAENRMHVQKALIEYLLLGHRED.

Residues S54–T57, Q81, R105, and H132–Q135 each bind carbamoyl phosphate. L-ornithine is bound by residues N163, D221, and S225–M226. Residues C261–L262 and R289 each bind carbamoyl phosphate.

Belongs to the aspartate/ornithine carbamoyltransferase superfamily. OTCase family.

The protein localises to the cytoplasm. The enzyme catalyses carbamoyl phosphate + L-ornithine = L-citrulline + phosphate + H(+). It functions in the pathway amino-acid biosynthesis; L-arginine biosynthesis; L-arginine from L-ornithine and carbamoyl phosphate: step 1/3. Reversibly catalyzes the transfer of the carbamoyl group from carbamoyl phosphate (CP) to the N(epsilon) atom of ornithine (ORN) to produce L-citrulline. This chain is Ornithine carbamoyltransferase, found in Chromobacterium violaceum (strain ATCC 12472 / DSM 30191 / JCM 1249 / CCUG 213 / NBRC 12614 / NCIMB 9131 / NCTC 9757 / MK).